Reading from the N-terminus, the 236-residue chain is UPF0257 lipoprotein YnfC (236 aa).

Residues 1–16 (MKKPLLLTLLCMILAG) form the signal peptide. Cys-17 carries the N-palmitoyl cysteine lipid modification. Residue Cys-17 is the site of S-diacylglycerol cysteine attachment.

It belongs to the UPF0257 family.

It is found in the cell membrane. This Salmonella dublin (strain CT_02021853) protein is UPF0257 lipoprotein YnfC.